Here is a 284-residue protein sequence, read N- to C-terminus: Bifunctional protein FolD (284 aa).

Residues 165–167, Ser-190, and Val-231 contribute to the NADP(+) site; that span reads GRS.

Belongs to the tetrahydrofolate dehydrogenase/cyclohydrolase family. Homodimer.

It catalyses the reaction (6R)-5,10-methylene-5,6,7,8-tetrahydrofolate + NADP(+) = (6R)-5,10-methenyltetrahydrofolate + NADPH. The enzyme catalyses (6R)-5,10-methenyltetrahydrofolate + H2O = (6R)-10-formyltetrahydrofolate + H(+). It functions in the pathway one-carbon metabolism; tetrahydrofolate interconversion. Catalyzes the oxidation of 5,10-methylenetetrahydrofolate to 5,10-methenyltetrahydrofolate and then the hydrolysis of 5,10-methenyltetrahydrofolate to 10-formyltetrahydrofolate. This Ruminiclostridium cellulolyticum (strain ATCC 35319 / DSM 5812 / JCM 6584 / H10) (Clostridium cellulolyticum) protein is Bifunctional protein FolD.